A 116-amino-acid chain; its full sequence is Iron-sulfur cluster insertion protein ErpA (116 aa).

Iron-sulfur cluster contacts are provided by Cys44, Cys108, and Cys110.

Belongs to the HesB/IscA family. In terms of assembly, homodimer. Iron-sulfur cluster is required as a cofactor.

Its function is as follows. Required for insertion of 4Fe-4S clusters for at least IspG. The sequence is that of Iron-sulfur cluster insertion protein ErpA from Shewanella putrefaciens (strain CN-32 / ATCC BAA-453).